A 750-amino-acid polypeptide reads, in one-letter code: MIIRSPEPEVKILVDRDHIKTSFEEWARPGHFSRTLAKGPDTTTWIWNLHADAHDFDSHTSDLEEISRKVFSAHFGQLSIIFLWLSGMYFHGARFSNYEAWLSDPTHIGPSAQVVWPVVGQEILNGDVGGGFRGIQITSGFFQIWRASGITSELQLYCTAIGALIFAALMLFAGWFHYHKAAPKLAWFQDVESMLNHHLAGLLGLGSLSWAGHQVHVSLPINQFLNAGVDPKEIPLPHEFILNRDLLAQLYPSFAEGATPFFTLNWSKYADFLTFRGGLDPVTGGLWLTDIAHHHLAIAILFLIAGHMYKTNWGIGHGLKDILEAHKGPFTGQGHKGLYEILTTSWHAQLSLNLAMLGSLTIVVAHHMYSMPPYPYLATDYGTQLSLFTHHMWIGGFLIVGAAAHAAIFMVRDYDPTTRYNDLLDRVLRHRDAIISHLNWACIFLGFHSFGLYIHNDTMSALGRPQDMFSDTAIQLQPVFAQWIQNTHALAPGATAPGATTSTSLTWGGGDLVAVGGKVALLPIPLGTADFLVHHIHAFTIHVTVLILLKGVLFARSSRLIPDKANLGFRFPCDGPGRGGTCQVSAWDHVFLGLFWMYNAISVVIFHFSWKMQSDVWGSISDQGVVTHITGGNFAQSSITINGWLRDFLWAQASQVIQSYGSSLSAYGLFFLGAHFVWAFSLMFLFSGRGYWQELIESIVWAHNKLKVAPATQPRALSIVQGRAVGVTHYLLGGIATTWAFFLARIIAVG.

The next 8 helical transmembrane spans lie at Val70–Ala93, Leu156–His179, Leu195–Leu219, Ile291–Tyr309, Trp346–Tyr369, Leu385–Val411, Ala433–His455, and Phe531–Leu549. Positions 573 and 582 each coordinate [4Fe-4S] cluster. 2 helical membrane-spanning segments follow: residues His589–Trp610 and Leu664–Phe686. His675 is a chlorophyll a' binding site. Chlorophyll a is bound by residues Met683 and Tyr691. Trp692 is a binding site for phylloquinone. A helical membrane pass occupies residues Ala724–Ala744.

It belongs to the PsaA/PsaB family. In terms of assembly, the PsaA/B heterodimer binds the P700 chlorophyll special pair and subsequent electron acceptors. PSI consists of a core antenna complex that captures photons, and an electron transfer chain that converts photonic excitation into a charge separation. The eukaryotic PSI reaction center is composed of at least 11 subunits. P700 is a chlorophyll a/chlorophyll a' dimer, A0 is one or more chlorophyll a, A1 is one or both phylloquinones and FX is a shared 4Fe-4S iron-sulfur center. serves as cofactor.

Its subcellular location is the plastid. The protein localises to the chloroplast thylakoid membrane. It catalyses the reaction reduced [plastocyanin] + hnu + oxidized [2Fe-2S]-[ferredoxin] = oxidized [plastocyanin] + reduced [2Fe-2S]-[ferredoxin]. Its function is as follows. PsaA and PsaB bind P700, the primary electron donor of photosystem I (PSI), as well as the electron acceptors A0, A1 and FX. PSI is a plastocyanin-ferredoxin oxidoreductase, converting photonic excitation into a charge separation, which transfers an electron from the donor P700 chlorophyll pair to the spectroscopically characterized acceptors A0, A1, FX, FA and FB in turn. Oxidized P700 is reduced on the lumenal side of the thylakoid membrane by plastocyanin. The sequence is that of Photosystem I P700 chlorophyll a apoprotein A1 from Panax ginseng (Korean ginseng).